A 222-amino-acid chain; its full sequence is Large ribosomal subunit protein uL1 (222 aa).

This sequence belongs to the universal ribosomal protein uL1 family. In terms of assembly, part of the 50S ribosomal subunit.

Functionally, binds directly to 23S rRNA. Probably involved in E site tRNA release. In terms of biological role, protein L1 is also a translational repressor protein, it controls the translation of its operon by binding to its mRNA. The polypeptide is Large ribosomal subunit protein uL1 (Pyrobaculum calidifontis (strain DSM 21063 / JCM 11548 / VA1)).